The following is a 396-amino-acid chain: Cell adhesion molecule 3 (396 aa).

The N-terminal stretch at 1–22 (MGAPSALPLLLLLACSWAPGGA) is a signal peptide. The 102-residue stretch at 23–124 (NLSQDDSQPW…VRTAKSLVTV (102 aa)) folds into the Ig-like V-type domain. At 23–328 (NLSQDDSQPW…PVPSSSSTYH (306 aa)) the chain is on the extracellular side. Disulfide bonds link cysteine 48–cysteine 108, cysteine 150–cysteine 207, and cysteine 252–cysteine 297. Ig-like C2-type domains follow at residues 128-226 (PQKP…QRIE) and 231-313 (PTAM…FTLN). Asparagine 288 carries an N-linked (GlcNAc...) asparagine glycan. Residues 329-349 (AIIGGIVAFIVFLLLILLIFL) form a helical membrane-spanning segment. Topologically, residues 350-396 (GHYLIRHKGTYLTHEAKGSDDAPDADTAIINAEGGQSGGDDKKEYFI) are cytoplasmic. Positions 365-396 (AKGSDDAPDADTAIINAEGGQSGGDDKKEYFI) are disordered. Position 386 is a phosphoserine (serine 386).

This sequence belongs to the nectin family. Homodimer. Can form trans-heterodimers with NECTIN3. Interacts with EPB41L1, DLG3, PALS2 and CASK. Mainly expressed in brain, in neuronal cell bodies of cerebellum, cortex, hippocampus, hypothalamus and spinal cord. In spinal cord predominantly expressed in motor neurons. Expressed in axons, presynaptic nerve terminals, glia cell processes.

The protein resides in the cell membrane. The protein localises to the cell junction. Its function is as follows. Involved in cell-cell adhesion. Has both calcium-independent homophilic cell-cell adhesion activity and calcium-independent heterophilic cell-cell adhesion activity with IGSF4, NECTIN1 and NECTIN3. Interaction with EPB41L1 may regulate structure or function of cell-cell junctions. This is Cell adhesion molecule 3 (Cadm3) from Mus musculus (Mouse).